Here is a 301-residue protein sequence, read N- to C-terminus: Phosphatidylcholine:diacylglycerol cholinephosphotransferase 1 (301 aa).

Positions 1–39 (MSAAAAETDVSLRRRSNSLNGNHTNGVAIDGTLDNNNRR) are disordered. A run of 5 helical transmembrane segments spans residues 88 to 108 (HWIPCMFAAGLLFFMGVEYTL), 141 to 161 (VLAALNTVFVGMQTTYIVWTW), 171 to 191 (IAALFMFTCRGILGYSTQLPL), 202 to 222 (FPVGNVSFFLFFSGHVAGSMI), and 255 to 275 (GHYTIDLAVGVGAGILFDSLA). Active-site residues include histidine 216, histidine 256, and aspartate 260.

Belongs to the phosphatidylcholine:diacylglycerol cholinephosphotransferase family.

Its subcellular location is the membrane. The enzyme catalyses 1,2-ditetradecanoyl-sn-glycero-3-phosphocholine + 1,2-di-(9Z-octadecenoyl)-sn-glycerol = 1,2-ditetradecanoyl-sn-glycerol + 1,2-di-(9Z-octadecenoyl)-sn-glycero-3-phosphocholine. Its function is as follows. Functions as a phosphatidylcholine:diacylglycerol cholinephosphotransferase that catalyzes the transfer of the phosphocholine headgroup from phosphatidylcholine (PC) to diacylglycerol, a major reaction for the transfer of 18:1 into phosphatidylcholine for desaturation and also for the reverse transfer of 18:2 and 18:3 into the triacylglycerols synthesis pathway. This Arabidopsis thaliana (Mouse-ear cress) protein is Phosphatidylcholine:diacylglycerol cholinephosphotransferase 1.